A 278-amino-acid polypeptide reads, in one-letter code: Formamidopyrimidine-DNA glycosylase (278 aa).

Residue P2 is the Schiff-base intermediate with DNA of the active site. E3 functions as the Proton donor in the catalytic mechanism. The active-site Proton donor; for beta-elimination activity is K58. DNA contacts are provided by H92 and R111. Residues H239 to I273 form an FPG-type zinc finger. The Proton donor; for delta-elimination activity role is filled by R263.

It belongs to the FPG family. In terms of assembly, monomer. Requires Zn(2+) as cofactor.

The catalysed reaction is Hydrolysis of DNA containing ring-opened 7-methylguanine residues, releasing 2,6-diamino-4-hydroxy-5-(N-methyl)formamidopyrimidine.. It catalyses the reaction 2'-deoxyribonucleotide-(2'-deoxyribose 5'-phosphate)-2'-deoxyribonucleotide-DNA = a 3'-end 2'-deoxyribonucleotide-(2,3-dehydro-2,3-deoxyribose 5'-phosphate)-DNA + a 5'-end 5'-phospho-2'-deoxyribonucleoside-DNA + H(+). Involved in base excision repair of DNA damaged by oxidation or by mutagenic agents. Acts as a DNA glycosylase that recognizes and removes damaged bases. Has a preference for oxidized purines, such as 7,8-dihydro-8-oxoguanine (8-oxoG). Has AP (apurinic/apyrimidinic) lyase activity and introduces nicks in the DNA strand. Cleaves the DNA backbone by beta-delta elimination to generate a single-strand break at the site of the removed base with both 3'- and 5'-phosphates. The protein is Formamidopyrimidine-DNA glycosylase of Latilactobacillus sakei subsp. sakei (strain 23K) (Lactobacillus sakei subsp. sakei).